A 406-amino-acid chain; its full sequence is Phosphopentomutase (406 aa).

Aspartate 10, aspartate 305, histidine 310, aspartate 346, histidine 347, and histidine 358 together coordinate Mn(2+).

It belongs to the phosphopentomutase family. It depends on Mn(2+) as a cofactor.

The protein localises to the cytoplasm. It carries out the reaction 2-deoxy-alpha-D-ribose 1-phosphate = 2-deoxy-D-ribose 5-phosphate. It catalyses the reaction alpha-D-ribose 1-phosphate = D-ribose 5-phosphate. The protein operates within carbohydrate degradation; 2-deoxy-D-ribose 1-phosphate degradation; D-glyceraldehyde 3-phosphate and acetaldehyde from 2-deoxy-alpha-D-ribose 1-phosphate: step 1/2. Functionally, isomerase that catalyzes the conversion of deoxy-ribose 1-phosphate (dRib-1-P) and ribose 1-phosphate (Rib-1-P) to deoxy-ribose 5-phosphate (dRib-5-P) and ribose 5-phosphate (Rib-5-P), respectively. The polypeptide is Phosphopentomutase (Rhizobium etli (strain ATCC 51251 / DSM 11541 / JCM 21823 / NBRC 15573 / CFN 42)).